The primary structure comprises 556 residues: 2-succinyl-5-enolpyruvyl-6-hydroxy-3-cyclohexene-1-carboxylate synthase (556 aa).

Belongs to the TPP enzyme family. MenD subfamily. As to quaternary structure, homodimer. The cofactor is Mg(2+). Requires Mn(2+) as cofactor. It depends on thiamine diphosphate as a cofactor.

The catalysed reaction is isochorismate + 2-oxoglutarate + H(+) = 5-enolpyruvoyl-6-hydroxy-2-succinyl-cyclohex-3-ene-1-carboxylate + CO2. Its pathway is quinol/quinone metabolism; 1,4-dihydroxy-2-naphthoate biosynthesis; 1,4-dihydroxy-2-naphthoate from chorismate: step 2/7. The protein operates within quinol/quinone metabolism; menaquinone biosynthesis. Functionally, catalyzes the thiamine diphosphate-dependent decarboxylation of 2-oxoglutarate and the subsequent addition of the resulting succinic semialdehyde-thiamine pyrophosphate anion to isochorismate to yield 2-succinyl-5-enolpyruvyl-6-hydroxy-3-cyclohexene-1-carboxylate (SEPHCHC). This is 2-succinyl-5-enolpyruvyl-6-hydroxy-3-cyclohexene-1-carboxylate synthase from Salmonella typhi.